The primary structure comprises 223 residues: Noggin (223 aa).

A signal peptide spans M1–C26. Residue N61 is glycosylated (N-linked (GlcNAc...) asparagine). 4 cysteine pairs are disulfide-bonded: C143–C180, C166–C217, C172–C219, and C195–C204.

The protein belongs to the noggin family. Homodimer.

Its subcellular location is the secreted. Its function is as follows. Inhibitor of bone morphogenetic proteins (BMP) signaling. This is Noggin (nog) from Takifugu rubripes (Japanese pufferfish).